Reading from the N-terminus, the 327-residue chain is Zinc finger protein 444 (327 aa).

M1 is modified (N-acetylmethionine). K8 is covalently cross-linked (Glycyl lysine isopeptide (Lys-Gly) (interchain with G-Cter in SUMO2)). Phosphoserine is present on residues S18 and S104. The 85-residue stretch at 20–104 (WHRFRRFHLG…LEELWGPAAS (85 aa)) folds into the SCAN box domain. The disordered stretch occupies residues 101–171 (PAASPDGSSA…SPPLAPGLPA (71 aa)). Over residues 106 to 118 (DGSSATRVPQDVT) the composition is skewed to polar residues. Low complexity predominate over residues 134–148 (PLAGTAPGAEGPAPG). 2 consecutive C2H2-type zinc fingers follow at residues 179-201 (TSCP…RQSH) and 207-229 (HACP…RDTH). K190 participates in a covalent cross-link: Glycyl lysine isopeptide (Lys-Gly) (interchain with G-Cter in SUMO2). Residues 220 to 243 (EHLRRHRDTHPGSPGSPGPALRPL) form a disordered region. S235 is modified (phosphoserine). C2H2-type zinc fingers lie at residues 250-272 (HACC…RKTH) and 278-300 (FACW…QRIH). Positions 305–314 (ASAQGAVAPG) are enriched in low complexity. Residues 305-327 (ASAQGAVAPGPDGGGPFPPWPLG) are disordered.

Belongs to the krueppel C2H2-type zinc-finger protein family.

The protein localises to the nucleus. Transcriptional regulator. Binds to the 5'-flanking critical region of the SCARF1 promoter. In Homo sapiens (Human), this protein is Zinc finger protein 444 (ZNF444).